The primary structure comprises 499 residues: Probable cytosol aminopeptidase (499 aa).

The Mn(2+) site is built by lysine 269 and aspartate 274. Residue lysine 281 is part of the active site. Mn(2+) is bound by residues aspartate 292, aspartate 351, and glutamate 353. Arginine 355 is a catalytic residue.

Belongs to the peptidase M17 family. Mn(2+) serves as cofactor.

The protein resides in the cytoplasm. The enzyme catalyses Release of an N-terminal amino acid, Xaa-|-Yaa-, in which Xaa is preferably Leu, but may be other amino acids including Pro although not Arg or Lys, and Yaa may be Pro. Amino acid amides and methyl esters are also readily hydrolyzed, but rates on arylamides are exceedingly low.. It catalyses the reaction Release of an N-terminal amino acid, preferentially leucine, but not glutamic or aspartic acids.. In terms of biological role, presumably involved in the processing and regular turnover of intracellular proteins. Catalyzes the removal of unsubstituted N-terminal amino acids from various peptides. This chain is Probable cytosol aminopeptidase, found in Actinobacillus pleuropneumoniae serotype 5b (strain L20).